The sequence spans 136 residues: MSAALLRRGLELLAASEAPRDPPGQAKPRGAPVKRPRKTKAIQAQKLRNSAKGKVPKSALDEYRKRECRDHLRVNLKFLTRTRSTVAESVSQQILRQNRGRKACDRPVAKTKKKKAEGTVFTEEDFQKFQQEYFGS.

Arginine 7 is modified (citrulline). A disordered region spans residues 13-58; the sequence is LAASEAPRDPPGQAKPRGAPVKRPRKTKAIQAQKLRNSAKGKVPKS. Serine 84 is subject to Phosphoserine.

Belongs to the AROS family. In terms of assembly, part of the small subunit (SSU) processome, composed of more than 70 proteins and the RNA chaperone small nucleolar RNA (snoRNA) U3. Interacts with RPS19; the interaction is direct and mediates the integration of RPS19 in state post-A1. Interacts with SIRT1. In terms of processing, citrullinated by PADI4. Widely expressed (at protein level).

Its subcellular location is the nucleus. The protein localises to the nucleolus. Its function is as follows. Part of the small subunit (SSU) processome, first precursor of the small eukaryotic ribosomal subunit. During the assembly of the SSU processome in the nucleolus, many ribosome biogenesis factors, an RNA chaperone and ribosomal proteins associate with the nascent pre-rRNA and work in concert to generate RNA folding, modifications, rearrangements and cleavage as well as targeted degradation of pre-ribosomal RNA by the RNA exosome. Acts as a chaperone that specifically mediates the integration of RPS19 in state post-A1. Direct regulator of SIRT1. Enhances SIRT1-mediated deacetylation of p53/TP53, thereby participating in inhibition of p53/TP53-mediated transcriptional activity. The protein is Active regulator of SIRT1 of Homo sapiens (Human).